The sequence spans 202 residues: ATP-dependent Clp protease proteolytic subunit 1 (202 aa).

The active-site Nucleophile is Ser-99. His-123 is a catalytic residue.

It belongs to the peptidase S14 family. As to quaternary structure, fourteen ClpP subunits assemble into 2 heptameric rings which stack back to back to give a disk-like structure with a central cavity, resembling the structure of eukaryotic proteasomes.

The protein resides in the cytoplasm. It carries out the reaction Hydrolysis of proteins to small peptides in the presence of ATP and magnesium. alpha-casein is the usual test substrate. In the absence of ATP, only oligopeptides shorter than five residues are hydrolyzed (such as succinyl-Leu-Tyr-|-NHMec, and Leu-Tyr-Leu-|-Tyr-Trp, in which cleavage of the -Tyr-|-Leu- and -Tyr-|-Trp bonds also occurs).. Cleaves peptides in various proteins in a process that requires ATP hydrolysis. Has a chymotrypsin-like activity. Plays a major role in the degradation of misfolded proteins. The polypeptide is ATP-dependent Clp protease proteolytic subunit 1 (Symbiobacterium thermophilum (strain DSM 24528 / JCM 14929 / IAM 14863 / T)).